We begin with the raw amino-acid sequence, 81 residues long: Antitoxin MT2731 (81 aa).

Antitoxin component of a type II toxin-antitoxin (TA) system. Neutralizes the effect of cognate toxin MT2730. The polypeptide is Antitoxin MT2731 (Mycobacterium tuberculosis (strain CDC 1551 / Oshkosh)).